An 876-amino-acid polypeptide reads, in one-letter code: Alanine--tRNA ligase (876 aa).

Zn(2+) is bound by residues His-565, His-569, Cys-667, and His-671.

It belongs to the class-II aminoacyl-tRNA synthetase family. It depends on Zn(2+) as a cofactor.

The protein localises to the cytoplasm. It carries out the reaction tRNA(Ala) + L-alanine + ATP = L-alanyl-tRNA(Ala) + AMP + diphosphate. Functionally, catalyzes the attachment of alanine to tRNA(Ala) in a two-step reaction: alanine is first activated by ATP to form Ala-AMP and then transferred to the acceptor end of tRNA(Ala). Also edits incorrectly charged Ser-tRNA(Ala) and Gly-tRNA(Ala) via its editing domain. This chain is Alanine--tRNA ligase, found in Staphylococcus aureus (strain MRSA252).